Here is a 63-residue protein sequence, read N- to C-terminus: U7-theraphotoxin-Cg1a (63 aa).

Positions 1-21 are cleaved as a signal peptide; the sequence is MKTSILFVIFGLALLFALSVA. The propeptide occupies 22–31; the sequence is IEMEEEETDR. Cystine bridges form between Cys-33/Cys-47, Cys-40/Cys-52, and Cys-46/Cys-59.

Expressed by the venom gland.

The protein localises to the secreted. In terms of biological role, inhibits preferentially tetrodotoxin-insensitive sodium currents (Nav) on rat cardiac myocytes (IC(50) is 0.26 uM) and has weaker inhibition activity toward tetrodotoxin-sensitive sodium currents on rat dorsal root ganglion (DRG) sensory neurons (IC(50) is 0.83 uM) and on cockroach dorsal unpaired median (DUM) neurons (IC(50) is 1.19 uM). Has no significant effect on potassium currents on DRG neurons. The chain is U7-theraphotoxin-Cg1a from Chilobrachys guangxiensis (Chinese earth tiger tarantula).